The primary structure comprises 22 residues: Mu-conotoxin CnIIIC (22 aa).

Glutamine 1 is modified (pyrrolidone carboxylic acid; partial). 3 cysteine pairs are disulfide-bonded: cysteine 3-cysteine 15, cysteine 4-cysteine 21, and cysteine 10-cysteine 22. Cysteine 22 carries the post-translational modification Cysteine amide.

It belongs to the conotoxin M superfamily. Expressed by the venom duct.

The protein resides in the secreted. Mu-conotoxins block voltage-gated sodium channels (Nav). This synthetic toxin blocks both voltage-gated sodium channels and nicotinic acetylcholine receptor (nAChR). Inhibits the skeletal muscle rNav1.4/SCN4A (IC(50)=1.3 nM) and the brain rNav1.2/SCN2A in a long-lasting manner. A low inhibition is also observed on neuronal mNav1.6/SCN8A and mNav1.7/SCN9A. Modestly blocks nAChR alpha-3/beta-2 subtype (IC(50)=450 nM) (partially reversible) and, to a lesser extent, alpha-7 and alpha-4/beta-2 subtypes (reversible). In vitro, decreases twitch tension in mouse hemidiaphragms (IC(50)=150 nM), and displays a high blocking effect in mouse extensor digitorum longus muscles (IC(50)=46 nM). The chain is Mu-conotoxin CnIIIC from Conus consors (Singed cone).